A 1152-amino-acid chain; its full sequence is ATP-dependent helicase/deoxyribonuclease subunit B (1152 aa).

Residues 1–338 enclose the UvrD-like helicase ATP-binding domain; sequence MSIRFIYGRA…LVRDRNYRFR (338 aa). 8–15 is a binding site for ATP; the sequence is GRAGSGKS. The region spanning 276–579 is the UvrD-like helicase C-terminal domain; sequence PYRFKNSEEL…NVGDIARIKG (304 aa). 4 residues coordinate [4Fe-4S] cluster: C785, C1106, C1109, and C1115.

It belongs to the helicase family. AddB/RexB type 1 subfamily. In terms of assembly, heterodimer of AddA and AddB. The cofactor is Mg(2+). Requires [4Fe-4S] cluster as cofactor.

The heterodimer acts as both an ATP-dependent DNA helicase and an ATP-dependent, dual-direction single-stranded exonuclease. Recognizes the chi site generating a DNA molecule suitable for the initiation of homologous recombination. The AddB subunit has 5' -&gt; 3' nuclease activity but not helicase activity. In Clostridium botulinum (strain Alaska E43 / Type E3), this protein is ATP-dependent helicase/deoxyribonuclease subunit B.